The sequence spans 505 residues: Lysine--tRNA ligase (505 aa).

Mg(2+) contacts are provided by Glu415 and Glu422.

This sequence belongs to the class-II aminoacyl-tRNA synthetase family. In terms of assembly, homodimer. It depends on Mg(2+) as a cofactor.

The protein localises to the cytoplasm. The enzyme catalyses tRNA(Lys) + L-lysine + ATP = L-lysyl-tRNA(Lys) + AMP + diphosphate. The sequence is that of Lysine--tRNA ligase from Xanthomonas oryzae pv. oryzae (strain MAFF 311018).